Here is a 192-residue protein sequence, read N- to C-terminus: UPF0149 protein YgfB (192 aa).

The protein belongs to the UPF0149 family.

The protein is UPF0149 protein YgfB of Escherichia coli O127:H6 (strain E2348/69 / EPEC).